The following is a 492-amino-acid chain: Beta-glucosidase 38 (492 aa).

Positions 1–21 (MNMPLLLLIAIVVVSLSHGNG) are cleaved as a signal peptide. Gln-45 lines the a beta-D-glucoside pocket. 2 N-linked (GlcNAc...) asparagine glycosylation sites follow: Asn-73 and Asn-77. A beta-D-glucoside-binding positions include His-146 and 191–192 (NE). The Proton donor role is filled by Glu-192. A disulfide bridge links Cys-211 with Cys-214. Asn-310 is a glycosylation site (N-linked (GlcNAc...) asparagine). Tyr-331 is a binding site for a beta-D-glucoside. Asn-341 carries an N-linked (GlcNAc...) asparagine glycan. An a beta-D-glucoside-binding site is contributed by Glu-400. Glu-400 functions as the Nucleophile in the catalytic mechanism. An N-linked (GlcNAc...) asparagine glycan is attached at Asn-408. Residues Trp-447, 454 to 455 (EW), and Phe-463 contribute to the a beta-D-glucoside site.

Belongs to the glycosyl hydrolase 1 family.

It catalyses the reaction Hydrolysis of terminal, non-reducing beta-D-glucosyl residues with release of beta-D-glucose.. The polypeptide is Beta-glucosidase 38 (BGLU38) (Oryza sativa subsp. japonica (Rice)).